A 260-amino-acid chain; its full sequence is NAD kinase (260 aa).

The active-site Proton acceptor is the Asp-49. NAD(+) is bound by residues 49–50, 119–120, Asp-149, Ala-157, and 160–165; these read DG, NE, and TAYNLS.

This sequence belongs to the NAD kinase family. The cofactor is a divalent metal cation.

It is found in the cytoplasm. The catalysed reaction is NAD(+) + ATP = ADP + NADP(+) + H(+). In terms of biological role, involved in the regulation of the intracellular balance of NAD and NADP, and is a key enzyme in the biosynthesis of NADP. Catalyzes specifically the phosphorylation on 2'-hydroxyl of the adenosine moiety of NAD to yield NADP. This chain is NAD kinase, found in Caulobacter vibrioides (strain ATCC 19089 / CIP 103742 / CB 15) (Caulobacter crescentus).